The primary structure comprises 154 residues: Lipoprotein signal peptidase (154 aa).

3 helical membrane-spanning segments follow: residues 8–28, 58–78, and 88–108; these read LYLI…NYIV, IFSG…AVVI, and NGLF…NFID. Catalysis depends on residues Asp117 and Asp133. A helical membrane pass occupies residues 131-151; it reads IADSAITVGIILVFIYLIFIS.

The protein belongs to the peptidase A8 family.

The protein resides in the cell membrane. The catalysed reaction is Release of signal peptides from bacterial membrane prolipoproteins. Hydrolyzes -Xaa-Yaa-Zaa-|-(S,diacylglyceryl)Cys-, in which Xaa is hydrophobic (preferably Leu), and Yaa (Ala or Ser) and Zaa (Gly or Ala) have small, neutral side chains.. The protein operates within protein modification; lipoprotein biosynthesis (signal peptide cleavage). This protein specifically catalyzes the removal of signal peptides from prolipoproteins. This chain is Lipoprotein signal peptidase, found in Lactobacillus johnsonii (strain CNCM I-12250 / La1 / NCC 533).